The chain runs to 129 residues: Small ribosomal subunit protein uS11 (129 aa).

This sequence belongs to the universal ribosomal protein uS11 family. As to quaternary structure, part of the 30S ribosomal subunit. Interacts with proteins S7 and S18. Binds to IF-3.

Its function is as follows. Located on the platform of the 30S subunit, it bridges several disparate RNA helices of the 16S rRNA. Forms part of the Shine-Dalgarno cleft in the 70S ribosome. This is Small ribosomal subunit protein uS11 from Rhizorhabdus wittichii (strain DSM 6014 / CCUG 31198 / JCM 15750 / NBRC 105917 / EY 4224 / RW1) (Sphingomonas wittichii).